The primary structure comprises 21 residues: Protein YmjD (21 aa).

The protein is Protein YmjD (ymjD) of Escherichia coli (strain K12).